Reading from the N-terminus, the 177-residue chain is Inorganic pyrophosphatase (177 aa).

Residues lysine 31, arginine 45, and tyrosine 57 each contribute to the substrate site. Positions 67, 72, and 104 each coordinate Mg(2+). Residue tyrosine 141 participates in substrate binding.

It belongs to the PPase family. As to quaternary structure, homohexamer. Mg(2+) serves as cofactor.

The protein localises to the cytoplasm. It catalyses the reaction diphosphate + H2O = 2 phosphate + H(+). Its function is as follows. Catalyzes the hydrolysis of inorganic pyrophosphate (PPi) forming two phosphate ions. In Halobacterium salinarum (strain ATCC 700922 / JCM 11081 / NRC-1) (Halobacterium halobium), this protein is Inorganic pyrophosphatase.